Here is a 460-residue protein sequence, read N- to C-terminus: Spermatogenesis-defective protein 39 homolog (460 aa).

At T21 the chain carries Phosphothreonine. Residues 70–101 (SIKETAGSSGSTSEGREQMKGRNSFYTQLPKP) are disordered. Positions 73–82 (ETAGSSGSTS) are enriched in low complexity. The residue at position 115 (T115) is a Phosphothreonine. S119, S122, and S128 each carry phosphoserine. Residues 121–133 (QSLSDALSDTPAK) show a composition bias toward polar residues. The disordered stretch occupies residues 121-141 (QSLSDALSDTPAKTYSPELGR). At T130 the chain carries Phosphothreonine.

It belongs to the SPE39 family. As to quaternary structure, interacts with VPS33B. Associates with the homotypic fusion and vacuole protein sorting (HOPS) complex; impaired by VPS33B. Interacts with RAB11A.

The protein localises to the cytoplasm. The protein resides in the cytoplasmic vesicle. It is found in the early endosome. It localises to the recycling endosome. Its subcellular location is the late endosome. Functionally, proposed to be involved in endosomal maturation implicating in part VPS33B. In epithelial cells, the VPS33B:VIPAS39 complex may play a role in the apical RAB11A-dependent recycling pathway and in the maintenance of the apical-basolateral polarity. May play a role in lysosomal trafficking, probably via association with the core HOPS complex in a discrete population of endosomes; the functions seems to be independent of VPS33B. May play a role in vesicular trafficking during spermatogenesis. May be involved in direct or indirect transcriptional regulation of E-cadherin. This Rattus norvegicus (Rat) protein is Spermatogenesis-defective protein 39 homolog (Vipas39).